The following is a 417-amino-acid chain: Carbon catabolite repressor protein 4 homolog 4 (417 aa).

Phe-2 bears the N-acetylserine mark. A Mg(2+)-binding site is contributed by Glu-143.

It belongs to the CCR4/nocturin family. In terms of assembly, component of the CCR4-NOT complex, at least composed of CRR4 and CAF1 proteins. Forms homooligomers. The cofactor is Mg(2+).

It is found in the nucleus. Its subcellular location is the cytoplasm. It catalyses the reaction Exonucleolytic cleavage of poly(A) to 5'-AMP.. Its function is as follows. Acts as a catalytic component of the CCR4-NOT core complex, which in the nucleus seems to be a general transcription factor, and in the cytoplasm the major mRNA deadenylase involved in mRNA turnover. Transcriptional regulator of circadian rhythms with poly(A)-degrading activity that affects the expression and rhythmicity of the clock core oscillator genes TOC1 and CCA1. Deadenylation may be a mechanism involved in the regulation of the circadian clock. May play a negative role in response against oxidative stress. Possesses magnesium-dependent poly(A)-specific exoribonuclease activity in vitro and is almost inactive with poly(U), poly(C) and poly(G) as substrates. The protein is Carbon catabolite repressor protein 4 homolog 4 of Arabidopsis thaliana (Mouse-ear cress).